Consider the following 459-residue polypeptide: Diaminopimelate decarboxylase (459 aa).

Position 89 is an N6-(pyridoxal phosphate)lysine (lysine 89). Pyridoxal 5'-phosphate contacts are provided by residues glycine 271 and 313 to 316 (EPGR). The substrate site is built by arginine 316, arginine 357, and tyrosine 361. Cysteine 388 functions as the Proton donor in the catalytic mechanism. Substrate-binding residues include glutamate 389 and tyrosine 418. Tyrosine 418 contributes to the pyridoxal 5'-phosphate binding site.

Belongs to the Orn/Lys/Arg decarboxylase class-II family. LysA subfamily. Homodimer. Requires pyridoxal 5'-phosphate as cofactor.

It catalyses the reaction meso-2,6-diaminopimelate + H(+) = L-lysine + CO2. It functions in the pathway amino-acid biosynthesis; L-lysine biosynthesis via DAP pathway; L-lysine from DL-2,6-diaminopimelate: step 1/1. In terms of biological role, specifically catalyzes the decarboxylation of meso-diaminopimelate (meso-DAP) to L-lysine. The chain is Diaminopimelate decarboxylase from Corynebacterium efficiens (strain DSM 44549 / YS-314 / AJ 12310 / JCM 11189 / NBRC 100395).